We begin with the raw amino-acid sequence, 321 residues long: Glucokinase (321 aa).

10–15 (GDIGGT) provides a ligand contact to ATP.

This sequence belongs to the bacterial glucokinase family.

It localises to the cytoplasm. It carries out the reaction D-glucose + ATP = D-glucose 6-phosphate + ADP + H(+). This chain is Glucokinase, found in Marinobacter nauticus (strain ATCC 700491 / DSM 11845 / VT8) (Marinobacter aquaeolei).